A 586-amino-acid chain; its full sequence is NudC domain-containing protein 1 (586 aa).

One can recognise a CS domain in the interval 275–364 (KREPLYNWQQ…EPGCTWAELV (90 aa)).

It is found in the cytoplasm. Its subcellular location is the nucleus. This chain is NudC domain-containing protein 1, found in Xenopus laevis (African clawed frog).